The primary structure comprises 429 residues: MKRIKFGLATQIFVGLILGVIVGVIWYGNPALPTYLQPIGDLFLRLIKMIVIPIVVSSLIIGVAGAGNGKQVGKLGFRTILYFEIITTFAIILGLALANIFHPGTGVNIHEAQKSDISQYVETEKEQSNKSVAETFLHIVPTNFFQSLVEGDLLAIICFTVLFALGISAIGERGKPVLAFFEGVSHAMFHVVNLVMKVAPFGVFALIGVTVSKFGLGSLISLGKLVGLVYVALAFFLIVIFGIVAKIAGISIFKFLAYMKDEILLAFSTSSSETVLPRIMEKMEKIGCPKGIVSFVIPIGYTFNLDGSVLYQSIAALFLAQVYGIDLTIWHQITLVLVLMVTSKGMAAVPGTSFVVLLATLGTIGVPAEGLAFIAGVDRIMDMARTVVNLTGNALAAVVMSKWEGMFNPAKAETVMSQSKTEQNATISG.

The Cytoplasmic portion of the chain corresponds to 1–5; the sequence is MKRIK. Residues 6-26 form a helical membrane-spanning segment; the sequence is FGLATQIFVGLILGVIVGVIW. At 27 to 45 the chain is on the extracellular side; the sequence is YGNPALPTYLQPIGDLFLR. Residues 46-66 traverse the membrane as a helical segment; it reads LIKMIVIPIVVSSLIIGVAGA. At 67 to 79 the chain is on the cytoplasmic side; it reads GNGKQVGKLGFRT. Residues 80 to 100 traverse the membrane as a helical segment; the sequence is ILYFEIITTFAIILGLALANI. Residues 101–150 are Extracellular-facing; it reads FHPGTGVNIHEAQKSDISQYVETEKEQSNKSVAETFLHIVPTNFFQSLVE. Residues 151 to 171 form a helical membrane-spanning segment; sequence GDLLAIICFTVLFALGISAIG. The Cytoplasmic segment spans residues 172–190; it reads ERGKPVLAFFEGVSHAMFH. Residues 191–211 form a helical membrane-spanning segment; sequence VVNLVMKVAPFGVFALIGVTV. Residues 212 to 224 are Extracellular-facing; sequence SKFGLGSLISLGK. A helical transmembrane segment spans residues 225–245; sequence LVGLVYVALAFFLIVIFGIVA. Position 246 (Lys-246) is a topological domain, cytoplasmic. A helical membrane pass occupies residues 247–267; sequence IAGISIFKFLAYMKDEILLAF. Topologically, residues 268–290 are extracellular; the sequence is STSSSETVLPRIMEKMEKIGCPK. A helical transmembrane segment spans residues 291–311; that stretch reads GIVSFVIPIGYTFNLDGSVLY. Residues 312–321 lie on the Cytoplasmic side of the membrane; the sequence is QSIAALFLAQ. Residues 322-342 traverse the membrane as a helical segment; it reads VYGIDLTIWHQITLVLVLMVT. Topologically, residues 343–353 are extracellular; that stretch reads SKGMAAVPGTS. The chain crosses the membrane as a helical span at residues 354 to 374; the sequence is FVVLLATLGTIGVPAEGLAFI. Over 375-429 the chain is Cytoplasmic; sequence AGVDRIMDMARTVVNLTGNALAAVVMSKWEGMFNPAKAETVMSQSKTEQNATISG.

This sequence belongs to the dicarboxylate/amino acid:cation symporter (DAACS) (TC 2.A.23) family. In terms of assembly, homotrimer. Interacts with FloT.

It localises to the cell membrane. The protein resides in the membrane raft. Functionally, this carrier protein is part of the Na(+)-dependent, binding-protein-independent glutamate-aspartate transport system. This chain is Proton/sodium-glutamate symport protein (gltT), found in Bacillus subtilis (strain 168).